Here is a 165-residue protein sequence, read N- to C-terminus: Large ribosomal subunit protein uL10 (165 aa).

It belongs to the universal ribosomal protein uL10 family. In terms of assembly, part of the ribosomal stalk of the 50S ribosomal subunit. The N-terminus interacts with L11 and the large rRNA to form the base of the stalk. The C-terminus forms an elongated spine to which L12 dimers bind in a sequential fashion forming a multimeric L10(L12)X complex.

Its function is as follows. Forms part of the ribosomal stalk, playing a central role in the interaction of the ribosome with GTP-bound translation factors. The chain is Large ribosomal subunit protein uL10 from Salmonella agona (strain SL483).